Reading from the N-terminus, the 371-residue chain is Terpene cyclase 6 (371 aa).

Positions 144, 266, 270, and 274 each coordinate Mg(2+). A D(D/E)XX(D/E) motif motif is present at residues 144–148; sequence DDVME. An NSE motif motif is present at residues 266-274; that stretch reads NDLYSYDKE. A WxxxxxRY motif motif is present at residues 352–359; the sequence is HHATLGRY. The (2E,6E)-farnesyl diphosphate site is built by R358 and Y359.

It belongs to the terpene synthase family. As to quaternary structure, homodimer. Requires Mg(2+) as cofactor.

The catalysed reaction is (2E,6E)-farnesyl diphosphate + H2O = (-)-alpha-acorenol + diphosphate. The protein operates within sesquiterpene biosynthesis. Its function is as follows. Terpene cyclase that catalyzes the cyclization of farnesyl diphosphate (FPP) to the spirocyclic sesquiterpene alpha-acorenol. The polypeptide is Terpene cyclase 6 (Gibberella fujikuroi (strain CBS 195.34 / IMI 58289 / NRRL A-6831) (Bakanae and foot rot disease fungus)).